Reading from the N-terminus, the 876-residue chain is DNA gyrase subunit A (876 aa).

The 499-residue stretch at L34–L532 folds into the Topo IIA-type catalytic domain. Y122 serves as the catalytic O-(5'-phospho-DNA)-tyrosine intermediate. The GyrA-box signature appears at Q559–G565. Residues D844–E876 are disordered. The span at E856–E876 shows a compositional bias: acidic residues.

The protein belongs to the type II topoisomerase GyrA/ParC subunit family. As to quaternary structure, heterotetramer, composed of two GyrA and two GyrB chains. In the heterotetramer, GyrA contains the active site tyrosine that forms a transient covalent intermediate with DNA, while GyrB binds cofactors and catalyzes ATP hydrolysis.

It localises to the cytoplasm. It carries out the reaction ATP-dependent breakage, passage and rejoining of double-stranded DNA.. A type II topoisomerase that negatively supercoils closed circular double-stranded (ds) DNA in an ATP-dependent manner to modulate DNA topology and maintain chromosomes in an underwound state. Negative supercoiling favors strand separation, and DNA replication, transcription, recombination and repair, all of which involve strand separation. Also able to catalyze the interconversion of other topological isomers of dsDNA rings, including catenanes and knotted rings. Type II topoisomerases break and join 2 DNA strands simultaneously in an ATP-dependent manner. This Klebsiella oxytoca protein is DNA gyrase subunit A.